The following is a 186-amino-acid chain: ATP synthase subunit delta (186 aa).

It belongs to the ATPase delta chain family. As to quaternary structure, F-type ATPases have 2 components, F(1) - the catalytic core - and F(0) - the membrane proton channel. F(1) has five subunits: alpha(3), beta(3), gamma(1), delta(1), epsilon(1). F(0) has three main subunits: a(1), b(2) and c(10-14). The alpha and beta chains form an alternating ring which encloses part of the gamma chain. F(1) is attached to F(0) by a central stalk formed by the gamma and epsilon chains, while a peripheral stalk is formed by the delta and b chains.

The protein localises to the cell inner membrane. Functionally, f(1)F(0) ATP synthase produces ATP from ADP in the presence of a proton or sodium gradient. F-type ATPases consist of two structural domains, F(1) containing the extramembraneous catalytic core and F(0) containing the membrane proton channel, linked together by a central stalk and a peripheral stalk. During catalysis, ATP synthesis in the catalytic domain of F(1) is coupled via a rotary mechanism of the central stalk subunits to proton translocation. This protein is part of the stalk that links CF(0) to CF(1). It either transmits conformational changes from CF(0) to CF(1) or is implicated in proton conduction. The chain is ATP synthase subunit delta from Brucella abortus (strain S19).